The following is a 68-amino-acid chain: MKTITLNIKGIHCGCCVKNLTQVLTELDGVQSADVQLEGKANITFDENRVNVAQLIEVIEDAGFDATE.

In terms of domain architecture, HMA spans 2-67 (KTITLNIKGI…VIEDAGFDAT (66 aa)). A metal cation is bound by residues Cys-13 and Cys-16.

This is an uncharacterized protein from Haemophilus influenzae (strain ATCC 51907 / DSM 11121 / KW20 / Rd).